A 482-amino-acid chain; its full sequence is Glutamyl-tRNA(Gln) amidotransferase subunit A (482 aa).

Catalysis depends on charge relay system residues Lys-75 and Ser-150. Catalysis depends on Ser-174, which acts as the Acyl-ester intermediate.

Belongs to the amidase family. GatA subfamily. In terms of assembly, heterotrimer of A, B and C subunits.

It carries out the reaction L-glutamyl-tRNA(Gln) + L-glutamine + ATP + H2O = L-glutaminyl-tRNA(Gln) + L-glutamate + ADP + phosphate + H(+). Its function is as follows. Allows the formation of correctly charged Gln-tRNA(Gln) through the transamidation of misacylated Glu-tRNA(Gln) in organisms which lack glutaminyl-tRNA synthetase. The reaction takes place in the presence of glutamine and ATP through an activated gamma-phospho-Glu-tRNA(Gln). The chain is Glutamyl-tRNA(Gln) amidotransferase subunit A from Rippkaea orientalis (strain PCC 8801 / RF-1) (Cyanothece sp. (strain PCC 8801)).